Reading from the N-terminus, the 190-residue chain is Small ribosomal subunit protein eS7x (190 aa).

M1 is subject to N-acetylmethionine. A coiled-coil region spans residues 17–50; that stretch reads TECEEQVAQALFDLENTNQELKSELKDLYINQAV.

This sequence belongs to the eukaryotic ribosomal protein eS7 family.

The polypeptide is Small ribosomal subunit protein eS7x (RPS7C) (Arabidopsis thaliana (Mouse-ear cress)).